A 406-amino-acid chain; its full sequence is Cyclin-dependent kinase 4 homolog (406 aa).

In terms of domain architecture, Protein kinase spans 102-388 (TFLFQALGKG…ARGALSHPFL (287 aa)). Residues 108-116 (LGKGAYGNV) and K131 each bind ATP. D233 functions as the Proton acceptor in the catalytic mechanism. The Mg(2+) site is built by N238 and D251.

Belongs to the protein kinase superfamily. CMGC Ser/Thr protein kinase family. CDC2/CDKX subfamily. Interacts with cyd-1; the interaction is likely involved in regulating cdk-4 activity. It depends on Mg(2+) as a cofactor.

It catalyses the reaction L-seryl-[protein] + ATP = O-phospho-L-seryl-[protein] + ADP + H(+). The enzyme catalyses L-threonyl-[protein] + ATP = O-phospho-L-threonyl-[protein] + ADP + H(+). Functionally, serine/threonine-protein kinase which, in association with cyclin D-like protein cyd-1, is required for the progression through the G1 phase of the cell cycle during postembryonic development by phosphorylating and inhibiting lin-35 and fzr-1. In complex with cyd-1, involved in sex determination during gonadogenesis by regulating the asymmetric division of the somatic gonadal precursor cell (SGP). This is Cyclin-dependent kinase 4 homolog from Caenorhabditis elegans.